We begin with the raw amino-acid sequence, 404 residues long: Cysteine desulfurase IscS (404 aa).

Residues 75-76 (AT), N155, Q183, and 203-205 (SAH) each bind pyridoxal 5'-phosphate. K206 carries the N6-(pyridoxal phosphate)lysine modification. T243 contributes to the pyridoxal 5'-phosphate binding site. The active-site Cysteine persulfide intermediate is the C328. C328 is a [2Fe-2S] cluster binding site.

This sequence belongs to the class-V pyridoxal-phosphate-dependent aminotransferase family. NifS/IscS subfamily. In terms of assembly, homodimer. Forms a heterotetramer with IscU, interacts with other sulfur acceptors. Requires pyridoxal 5'-phosphate as cofactor.

The protein resides in the cytoplasm. It catalyses the reaction (sulfur carrier)-H + L-cysteine = (sulfur carrier)-SH + L-alanine. The protein operates within cofactor biosynthesis; iron-sulfur cluster biosynthesis. In terms of biological role, master enzyme that delivers sulfur to a number of partners involved in Fe-S cluster assembly, tRNA modification or cofactor biosynthesis. Catalyzes the removal of elemental sulfur atoms from cysteine to produce alanine. Functions as a sulfur delivery protein for Fe-S cluster synthesis onto IscU, an Fe-S scaffold assembly protein, as well as other S acceptor proteins. The polypeptide is Cysteine desulfurase IscS (Proteus mirabilis (strain HI4320)).